The primary structure comprises 449 residues: MTDPERTIAAQATAAGQGAIAVIRMSGPGCMDILKQCTPAAFTERLRPRRATLVCIRDAEGAAIDQALVTWFPAPASYTGEDTAEISCHGGMLVTDRLLKRLYQCGASPAEPGEFTKRAFLNGRMDLTQAEAVMDVISAGSDLALKAAQSQLDGGIGAQVDELKDNLVHVLAHIEAYIDFPDEDISPDTASDLLARLRNMEEKLDTLLKTAEGGRLLREGIRTAIAGPPNVGKSSLLNTLLGYDRAIVSNIAGTTRDTVEESIQLAGLALRLIDTAGVRESSDVIEQAGITRTNRALETADLVLEVADASTPRVKDFPAPVLTAPRLLILNKCDLGIHPDWKAVPGIRFSCATGEGRKELEEAIIQAFSSSLPGETGSSLVAINARHQHELGLCREHVRLASESISRQESPEFTALELREALTHLGEITGAVDTEDVLGAIFSSFCLGK.

Residues Arg-24, Glu-85, and Arg-124 each contribute to the (6S)-5-formyl-5,6,7,8-tetrahydrofolate site. The TrmE-type G domain maps to 220–369 (GIRTAIAGPP…LEEAIIQAFS (150 aa)). Position 230 (Asn-230) interacts with K(+). Residues 230–235 (NVGKSS), 249–255 (SNIAGTT), and 274–277 (DTAG) each bind GTP. Ser-234 serves as a coordination point for Mg(2+). 3 residues coordinate K(+): Ser-249, Ile-251, and Thr-254. Mg(2+) is bound at residue Thr-255. Lys-449 is a binding site for (6S)-5-formyl-5,6,7,8-tetrahydrofolate.

It belongs to the TRAFAC class TrmE-Era-EngA-EngB-Septin-like GTPase superfamily. TrmE GTPase family. As to quaternary structure, homodimer. Heterotetramer of two MnmE and two MnmG subunits. The cofactor is K(+).

The protein localises to the cytoplasm. Its function is as follows. Exhibits a very high intrinsic GTPase hydrolysis rate. Involved in the addition of a carboxymethylaminomethyl (cmnm) group at the wobble position (U34) of certain tRNAs, forming tRNA-cmnm(5)s(2)U34. This chain is tRNA modification GTPase MnmE, found in Akkermansia muciniphila (strain ATCC BAA-835 / DSM 22959 / JCM 33894 / BCRC 81048 / CCUG 64013 / CIP 107961 / Muc).